A 432-amino-acid chain; its full sequence is Competence protein ComFA (432 aa).

Zn(2+) contacts are provided by cysteine 40, cysteine 43, cysteine 60, and cysteine 63. In terms of domain architecture, Helicase ATP-binding spans 107-257 (LQAVDKQKPT…RLGELKRLNL (151 aa)). Residue 120–127 (AVTGAGKT) participates in ATP binding. The DEAD box signature appears at 205 to 208 (DEVD). Residues 289-432 (KLKSYIEKQR…IQMMNKEAGL (144 aa)) form the Helicase C-terminal domain.

It belongs to the DEAD box helicase family. As to quaternary structure, monomer and dimer in solution. Interacts with DprA and ComFC; ComFA-ComFC form rings about 150 Angstroms in diameter with apparent 6-fold symmetry. Zn(2+) serves as cofactor.

Its subcellular location is the cytoplasm. Functionally, involved in transformation (genetic competence for DNA uptake). DNA uptake is energy dependent, this protein may provide the driving force for DNA uptake. Does not have helicase activity, translocates on single-stranded (ss)DNA in a 5'-3' direction in an ATP-dependent manner, but does not unwind double-stranded (ds)DNA (tested with 5'- and 3'-overhang dsDNA). ATP hydrolysis causes the release of ssDNA from ComFA. A ssDNA-stimulated ATPase; dsDNA does not stimulate ATPase. ATP hydrolysis causes the release of ssDNA from ComFA. ComFC has no effect on ATPase activity. Binds ssDNA but only very poorly to dsDNA in the absence of ATP. Binding to ssDNA does not require free DNA ends. The polypeptide is Competence protein ComFA (Streptococcus pneumoniae (strain ATCC BAA-255 / R6)).